The chain runs to 428 residues: C4-dicarboxylate transport protein 1 (428 aa).

8 helical membrane-spanning segments follow: residues 5 to 27 (FYKI…GHFE), 42 to 64 (IQLI…IAGM), 77 to 99 (ALLY…GHIF), 150 to 167 (ILQI…LSAM), 188 to 210 (IVHV…TIGK), 225 to 247 (TFYL…LTGF), 314 to 336 (IFIS…LAVA), and 351 to 373 (FITL…VLIL).

Belongs to the dicarboxylate/amino acid:cation symporter (DAACS) (TC 2.A.23) family.

It is found in the cell inner membrane. Its function is as follows. Responsible for the transport of dicarboxylates such as succinate, fumarate, and malate from the periplasm across the membrane. The sequence is that of C4-dicarboxylate transport protein 1 (dctA1) from Ralstonia nicotianae (strain ATCC BAA-1114 / GMI1000) (Ralstonia solanacearum).